The sequence spans 152 residues: Large ribosomal subunit protein bL9 (152 aa).

It belongs to the bacterial ribosomal protein bL9 family.

Its function is as follows. Binds to the 23S rRNA. This chain is Large ribosomal subunit protein bL9, found in Prochlorococcus marinus (strain NATL1A).